The primary structure comprises 599 residues: Elongation factor 4 (599 aa).

The region spanning 2 to 184 (KNIRNFSIIA…RLVRDIPPPE (183 aa)) is the tr-type G domain. Residues 14-19 (DHGKST) and 131-134 (NKID) each bind GTP.

It belongs to the TRAFAC class translation factor GTPase superfamily. Classic translation factor GTPase family. LepA subfamily.

Its subcellular location is the cell inner membrane. It carries out the reaction GTP + H2O = GDP + phosphate + H(+). Functionally, required for accurate and efficient protein synthesis under certain stress conditions. May act as a fidelity factor of the translation reaction, by catalyzing a one-codon backward translocation of tRNAs on improperly translocated ribosomes. Back-translocation proceeds from a post-translocation (POST) complex to a pre-translocation (PRE) complex, thus giving elongation factor G a second chance to translocate the tRNAs correctly. Binds to ribosomes in a GTP-dependent manner. This Escherichia coli O8 (strain IAI1) protein is Elongation factor 4.